The sequence spans 421 residues: N-succinylarginine dihydrolase (421 aa).

Substrate-binding positions include 19–28 (AGLSLGNLAS), N105, and 132–133 (HR). E167 is an active-site residue. R199 contacts substrate. H235 is a catalytic residue. Substrate is bound by residues D237 and N346. C352 acts as the Nucleophile in catalysis.

It belongs to the succinylarginine dihydrolase family. In terms of assembly, homodimer.

The catalysed reaction is N(2)-succinyl-L-arginine + 2 H2O + 2 H(+) = N(2)-succinyl-L-ornithine + 2 NH4(+) + CO2. The protein operates within amino-acid degradation; L-arginine degradation via AST pathway; L-glutamate and succinate from L-arginine: step 2/5. In terms of biological role, catalyzes the hydrolysis of N(2)-succinylarginine into N(2)-succinylornithine, ammonia and CO(2). This is N-succinylarginine dihydrolase from Novosphingobium aromaticivorans (strain ATCC 700278 / DSM 12444 / CCUG 56034 / CIP 105152 / NBRC 16084 / F199).